The primary structure comprises 768 residues: Ribonucleoside-diphosphate reductase large chain (768 aa).

Residues 7–8 (SK) and 13–19 (EKLGIDL) contribute to the ATP site. GDP is bound by residues threonine 196 and serine 211. A disulfide bond links cysteine 212 and cysteine 437. DTTP-binding positions include 220–222 (DSI), lysine 237, and arginine 250. Asparagine 420 lines the GDP pocket. Asparagine 420 serves as the catalytic Proton acceptor. Cysteine 422 (cysteine radical intermediate) is an active-site residue. Glutamate 424 contributes to the GDP binding site. Residue glutamate 424 is the Proton acceptor of the active site.

Belongs to the ribonucleoside diphosphate reductase large chain family. Heterodimer of a large and a small subunit.

The enzyme catalyses a 2'-deoxyribonucleoside 5'-diphosphate + [thioredoxin]-disulfide + H2O = a ribonucleoside 5'-diphosphate + [thioredoxin]-dithiol. Under complex allosteric control mediated by deoxynucleoside triphosphates and ATP binding to separate specificity and activation sites on the large subunit. The type of nucleotide bound at the specificity site determines substrate preference. It seems probable that ATP makes the enzyme reduce CDP and UDP, dGTP favors ADP reduction and dTTP favors GDP reduction. Stimulated by ATP and inhibited by dATP binding to the activity site. In terms of biological role, provides the precursors necessary for DNA synthesis. Catalyzes the biosynthesis of deoxyribonucleotides from the corresponding ribonucleotides. The protein is Ribonucleoside-diphosphate reductase large chain of Encephalitozoon cuniculi (strain GB-M1) (Microsporidian parasite).